We begin with the raw amino-acid sequence, 122 residues long: Large ribosomal subunit protein uL14 (122 aa).

It belongs to the universal ribosomal protein uL14 family. Part of the 50S ribosomal subunit. Forms a cluster with proteins L3 and L19. In the 70S ribosome, L14 and L19 interact and together make contacts with the 16S rRNA in bridges B5 and B8.

In terms of biological role, binds to 23S rRNA. Forms part of two intersubunit bridges in the 70S ribosome. The chain is Large ribosomal subunit protein uL14 from Bifidobacterium adolescentis (strain ATCC 15703 / DSM 20083 / NCTC 11814 / E194a).